Consider the following 136-residue polypeptide: Small ribosomal subunit protein uS9 (136 aa).

Residues Pro103–Ala116 show a composition bias toward basic and acidic residues. The tract at residues Pro103–Arg136 is disordered. Residues Lys117–Arg136 show a composition bias toward basic residues.

The protein belongs to the universal ribosomal protein uS9 family.

This chain is Small ribosomal subunit protein uS9 (rpsI), found in Prochlorococcus marinus (strain SARG / CCMP1375 / SS120).